Here is a 107-residue protein sequence, read N- to C-terminus: Ornithine carbamoyltransferase, catabolic (107 aa).

Residues 57-61 and Gln-84 contribute to the carbamoyl phosphate site; that span reads STRTR.

This sequence belongs to the aspartate/ornithine carbamoyltransferase superfamily. OTCase family.

It is found in the cytoplasm. It carries out the reaction carbamoyl phosphate + L-ornithine = L-citrulline + phosphate + H(+). Its pathway is amino-acid degradation; L-arginine degradation via ADI pathway; carbamoyl phosphate from L-arginine: step 2/2. The protein is Ornithine carbamoyltransferase, catabolic (arcB) of Streptococcus pyogenes.